We begin with the raw amino-acid sequence, 436 residues long: MLDPVEASSVPVVDDSTIRSLSDFPDRNVFRREDRYPALNIPVRRTAELRKTLKHVLWRRPKTKNVYDDETDPQRRILVLANIDEDAFRDETVQRLIQHEDCRKASYTVTTAYENYTVEEILKQLLPNESEIPSAFEMVGHLAHVNLRSSQLPFKYWIGKVMLDKNQPRIRTVVNKLGTIETEYRTFGMEVIAGYQGENWSVVTVKEERCTFRLDFTKVYWNSRLAGEHRRLVQQILKESQTKPLVVADLMAGVGPFAVPLTASHGRRNQVTVYANDLNPESYKYLLQNVQSNKCTNIHCYNQCGRAMVHQLQAENIEVDHVIMNLPASAPEFLDAFRGYEGVKRPCIHVHCFAPKASEATDYQDALDRCSSALGCTLDRISNDVHVHVVRDVSPNKNMLSVSFLLPVETQSLVKMKLQPLRTETSEPGAKRIKSN.

Residues His-229, 277–278 (DL), and Asn-325 contribute to the S-adenosyl-L-methionine site.

The protein belongs to the class I-like SAM-binding methyltransferase superfamily. TRM5/TYW2 family. Monomer.

It localises to the mitochondrion matrix. It is found in the nucleus. The protein localises to the cytoplasm. The enzyme catalyses guanosine(37) in tRNA + S-adenosyl-L-methionine = N(1)-methylguanosine(37) in tRNA + S-adenosyl-L-homocysteine + H(+). Functionally, specifically methylates the N1 position of guanosine-37 in various cytoplasmic and mitochondrial tRNAs. Methylation is not dependent on the nature of the nucleoside 5' of the target nucleoside. This is the first step in the biosynthesis of wybutosine (yW), a modified base adjacent to the anticodon of tRNAs and required for accurate decoding. The sequence is that of tRNA (guanine(37)-N(1))-methyltransferase 1 from Phaeodactylum tricornutum (strain CCAP 1055/1).